We begin with the raw amino-acid sequence, 237 residues long: Phosphoserine phosphatase (237 aa).

D30 functions as the Nucleophile in the catalytic mechanism. Mg(2+) is bound by residues D30 and D32. The Proton donor role is filled by D32. Substrate is bound by residues E39, R76, 120 to 121 (SG), and K169. Residue D192 coordinates Mg(2+). N195 provides a ligand contact to substrate.

The protein belongs to the HAD-like hydrolase superfamily. SerB family. Mg(2+) is required as a cofactor.

The catalysed reaction is O-phospho-L-serine + H2O = L-serine + phosphate. It catalyses the reaction O-phospho-D-serine + H2O = D-serine + phosphate. It participates in amino-acid biosynthesis; L-serine biosynthesis; L-serine from 3-phospho-D-glycerate: step 3/3. Functionally, catalyzes the dephosphorylation of phosphoserine (P-Ser) in vitro. Also catalyzes the dephosphorylation of phosphothreonine (P-Thr) in vitro. In Albidiferax ferrireducens (strain ATCC BAA-621 / DSM 15236 / T118) (Rhodoferax ferrireducens), this protein is Phosphoserine phosphatase.